The chain runs to 87 residues: Large ribosomal subunit protein bL31B (87 aa).

Belongs to the bacterial ribosomal protein bL31 family. Type B subfamily. Part of the 50S ribosomal subunit.

In Escherichia coli O8 (strain IAI1), this protein is Large ribosomal subunit protein bL31B.